The following is an 86-amino-acid chain: U15-lycotoxin-Ls1a (86 aa).

A signal peptide spans 1–20; sequence MNSKIFAVLFLLAFLSCVLS. A WAP domain is found at 21–66; sequence DQYCPKSSITACKKMNIRNDCCKDDDCTGGSWCCATPCGNFCKYPT. 5 disulfides stabilise this stretch: cysteine 24–cysteine 54, cysteine 32–cysteine 58, cysteine 41–cysteine 53, cysteine 42–cysteine 80, and cysteine 47–cysteine 62.

This sequence belongs to the venom protein 11 family. 01 (wap-1) subfamily. In terms of processing, contains 5 disulfide bonds. As to expression, expressed by the venom gland.

It is found in the secreted. In terms of biological role, has antibacterial activity. This Lycosa singoriensis (Wolf spider) protein is U15-lycotoxin-Ls1a.